Reading from the N-terminus, the 622-residue chain is Chaperone protein HscA homolog (622 aa).

Belongs to the heat shock protein 70 family.

Its function is as follows. Chaperone involved in the maturation of iron-sulfur cluster-containing proteins. Has a low intrinsic ATPase activity which is markedly stimulated by HscB. The protein is Chaperone protein HscA homolog of Burkholderia cenocepacia (strain ATCC BAA-245 / DSM 16553 / LMG 16656 / NCTC 13227 / J2315 / CF5610) (Burkholderia cepacia (strain J2315)).